The sequence spans 273 residues: MGSGWVPWVVALLVNLTRLDSSMTQGTDSPEDFVIQAKADCYFTNGTEKVQFVVRFIFNLEEYVRFDSDVGMFVALTKLGQPDAEQWNSRLDLLERSRQAVDGVCRHNYRLGAPFTVGRKVQPEVTVYPERTPLLHQHNLLHCSVTGFYPGDIKIKWFLNGQEERAGVMSTGPIRNGDWTFQTVVMLEMTPELGHVYTCLVDHSSLLSPVSVEWRAQSEYSWRKMLSGIAAFLLGLIFLLVGIVIQLRAQKGYVRTQMSGNEVSRAVLLPQSC.

The first 26 residues, 1 to 26, serve as a signal peptide directing secretion; sequence MGSGWVPWVVALLVNLTRLDSSMTQG. The tract at residues 27–120 is beta-1; that stretch reads TDSPEDFVIQ…LGAPFTVGRK (94 aa). At 27-224 the chain is on the extracellular side; sequence TDSPEDFVIQ…RAQSEYSWRK (198 aa). Disulfide bonds link Cys-41–Cys-105 and Cys-143–Cys-199. The N-linked (GlcNAc...) asparagine glycan is linked to Asn-45. The segment at 121-214 is beta-2; it reads VQPEVTVYPE…SLLSPVSVEW (94 aa). The region spanning 123–213 is the Ig-like C1-type domain; the sequence is PEVTVYPERT…SSLLSPVSVE (91 aa). Residues 215–224 are connecting peptide; the sequence is RAQSEYSWRK. Residues 225–245 form a helical membrane-spanning segment; it reads MLSGIAAFLLGLIFLLVGIVI. Residues 246 to 273 lie on the Cytoplasmic side of the membrane; sequence QLRAQKGYVRTQMSGNEVSRAVLLPQSC.

The protein belongs to the MHC class II family. Heterodimer of an alpha chain (DOA) and a beta chain (DOB). Forms a heterotetrameric complex with an HLA-DM molecule during intracellular transport in endosomal/lysosomal compartments in B-cells.

It is found in the endosome membrane. The protein localises to the lysosome membrane. In terms of biological role, important modulator in the HLA class II restricted antigen presentation pathway by interaction with the HLA-DM molecule in B-cells. Modifies peptide exchange activity of HLA-DM. The chain is HLA class II histocompatibility antigen, DO beta chain (HLA-DOB) from Homo sapiens (Human).